The chain runs to 506 residues: GTPase Der (506 aa).

EngA-type G domains follow at residues 3–166 (PVVA…GEQL) and 218–391 (IKIA…ACAT). Residues 9–16 (GRPNVGKS), 56–60 (DTGGI), 118–121 (NKTD), 224–231 (GRPNVGKS), 271–275 (DTAGV), and 336–339 (NKWD) contribute to the GTP site. The KH-like domain occupies 392-476 (QKTSTSMLTR…PIRIQFQEGN (85 aa)).

This sequence belongs to the TRAFAC class TrmE-Era-EngA-EngB-Septin-like GTPase superfamily. EngA (Der) GTPase family. Associates with the 50S ribosomal subunit.

Functionally, GTPase that plays an essential role in the late steps of ribosome biogenesis. This chain is GTPase Der, found in Actinobacillus pleuropneumoniae serotype 5b (strain L20).